Here is a 296-residue protein sequence, read N- to C-terminus: Protein FAM221A (296 aa).

Residues 235 to 263 (MQPPSTSSPQPLAVGPSTQISSLRKPEED) form a disordered region. A compositionally biased stretch (polar residues) spans 237–256 (PPSTSSPQPLAVGPSTQISS).

It belongs to the FAM221 family.

The protein is Protein FAM221A (Fam221a) of Rattus norvegicus (Rat).